The primary structure comprises 164 residues: Anthrone oxygenase AgnL2 (164 aa).

3 helical membrane passes run 11-31 (VVTG…AVPV), 48-70 (RMYH…LYAY), and 85-105 (VFAL…LCMV).

The protein belongs to the anthrone oxygenase family.

The protein localises to the membrane. The catalysed reaction is emodin anthrone + O2 = emodin + H2O + H(+). It functions in the pathway secondary metabolite biosynthesis. Functionally, anthrone oxygenase; part of the gene cluster that mediates the biosynthesis of agnestins, dihydroxy-xanthone metabolites. The pathway begins with the assembly and cyclization of atrochrysone thioester by the non-reducing polyketide synthase Agnpks1. The atrochrysone carboxyl ACP thioesterase AgnL7 then breaks the thioester bond and releases the atrochrysone carboxylic acid as the first enzyme-free intermediate. The decarboxylase AgnL1 then catalyzes the concerted decarboxylation-elimination required to convert atochrysone carboxylic acid into emodin anthrone, which is further oxidized to emodin by the anthrone oxygenase AgnL2. Emodin then undergoes reduction catalyzed by the oxidoreductase AgnL4 to yield the dihydroquinone tautomer which is the substrate for reduction by the short chain dehydrogenase AgnL6 reduction to produce hydroxyketone, followed by AgnL8 dehydration and likely spontaneous autoxidation to chrysophanol. Baeyer-Villiger oxidation by the oxidase AgnL3 leads to monodictyphenone via cleavage of the C-10/C-10a bond of chrysophanol. Alternative cleavage at the C-4a/C-10 bond of chrysophanol also leads to the formation some cephalone F. Further conversion to agnestins A and B, requires reduction to dihydro-monodictyphenone, oxidation to agnestin C probably via an epoxide, and rearrangement to either agnestin A or agnestin B directly, although agnestin A or agnestin B can also interconvert. Within the cluster, AgnR1 is the only unassigned oxidoreductase present which could be involved in this conversion. However, AgnR1 seems not to be involved in this step, and thus genes involved in the proposed oxidation/reduction may be located elsewhere on the genome. Further agnestin A derivatives are probably formed by spontaneous decarboxylations, dehydrations and methanolysis reactions. The sequence is that of Anthrone oxygenase AgnL2 from Paecilomyces divaricatus (Penicillium divaricatum).